A 378-amino-acid chain; its full sequence is SPbeta prophage-derived uncharacterized protein YorJ (378 aa).

In Bacillus subtilis (strain 168), this protein is SPbeta prophage-derived uncharacterized protein YorJ (yorJ).